Reading from the N-terminus, the 28-residue chain is NU-theraphotoxin-Preg1a (28 aa).

3 cysteine pairs are disulfide-bonded: cysteine 2–cysteine 19, cysteine 9–cysteine 22, and cysteine 18–cysteine 27.

As to expression, expressed by the venom gland.

The protein resides in the secreted. Functionally, toxin that acts as an agonist on melanocortin receptors (MC1R, MC3R, MC5R, MC5R). After binding to MC1R, the peptide activates the hMC1R/Gs pathway, but after binding to MC4R, it is not able to activate or antagonize the MC4R/Gs pathway. Inhibits melanocyte stimulating hormone (MSH)-binding to human receptors (Ki=1.8 uM to MC1R, Ki=19.8 uM to MC3R, Ki=7.1 uM to MC4R, Ki=10.0 uM to MC5R). This toxin is structurally unrelated to the natural agonists. The protein is NU-theraphotoxin-Preg1a of Poecilotheria regalis (Indian ornamental tree spider).